Here is a 1486-residue protein sequence, read N- to C-terminus: Chromosome partition protein MukB (1486 aa).

An ATP-binding site is contributed by 34 to 41 (GGNGAGKS). 3 coiled-coil regions span residues 326–418 (LEAD…QYNQ), 444–480 (LETF…QAYQ), and 509–603 (RHLA…RAPV). The tract at residues 666–783 (PGGSEDQRLN…EVPLFGRAAR (118 aa)) is flexible hinge. Coiled coils occupy residues 835–923 (EAEI…AKLE), 977–1115 (EMLS…TAKA), and 1209–1266 (VEAI…QNVS).

It belongs to the SMC family. MukB subfamily. Homodimerization via its hinge domain. Binds to DNA via its C-terminal region. Interacts, and probably forms a ternary complex, with MukE and MukF via its C-terminal region. The complex formation is stimulated by calcium or magnesium. Interacts with tubulin-related protein FtsZ.

Its subcellular location is the cytoplasm. It localises to the nucleoid. Functionally, plays a central role in chromosome condensation, segregation and cell cycle progression. Functions as a homodimer, which is essential for chromosome partition. Involved in negative DNA supercoiling in vivo, and by this means organize and compact chromosomes. May achieve or facilitate chromosome segregation by condensation DNA from both sides of a centrally located replisome during cell division. This Escherichia coli O1:K1 / APEC protein is Chromosome partition protein MukB.